Consider the following 631-residue polypeptide: Acurin A biosynthesis cluster transcription regulator (631 aa).

The segment covering 1 to 11 (MSPNMSLTASH) has biased composition (polar residues). The tract at residues 1-28 (MSPNMSLTASHPQQPQPTPQSKAQLTRQ) is disordered. Positions 30 to 62 (CNRCHASKLKCLRPPGVTTSKSCIRCIKADTEC) form a DNA-binding region, zn(2)-C6 fungal-type. 3 disordered regions span residues 64–141 (YDPP…PDNR), 489–522 (CSSSASTSSTASTTSCSTRAPPSSATGGAHHPAT), and 536–573 (HSSSDHLFSQPEGRGYAPYNHAFHPPPPSRHTHNYPTP). Residues 88-99 (IEAREPEVTDPR) are compositionally biased toward basic and acidic residues. Positions 119 to 128 (NGSLAPSSAA) are enriched in polar residues.

It is found in the nucleus. Transcription factor that positively regulates the expression of the cluster that mediates the biosynthesis of acurin A, a highly reduced polyketide coupled to a serine via a peptide bond. This Aspergillus aculeatus (strain ATCC 16872 / CBS 172.66 / WB 5094) protein is Acurin A biosynthesis cluster transcription regulator.